A 146-amino-acid chain; its full sequence is Large ribosomal subunit protein uL24z (146 aa).

Disordered regions lie at residues 1–26 (MKYN…SSER) and 121–146 (KAKG…QNVD). Residues 9-18 (SSRRKNRKAH) show a composition bias toward basic residues. Over residues 121–138 (KAKGRAAADKEKGTKFTS) the composition is skewed to basic and acidic residues.

It belongs to the universal ribosomal protein uL24 family.

The protein is Large ribosomal subunit protein uL24z (RPL26A) of Arabidopsis thaliana (Mouse-ear cress).